The sequence spans 57 residues: UPF0391 membrane protein Nham_2738 (57 aa).

2 consecutive transmembrane segments (helical) span residues 4–24 (WVVT…GGLA) and 30–50 (IAKI…VVGL).

This sequence belongs to the UPF0391 family.

It localises to the cell membrane. The sequence is that of UPF0391 membrane protein Nham_2738 from Nitrobacter hamburgensis (strain DSM 10229 / NCIMB 13809 / X14).